Reading from the N-terminus, the 576-residue chain is Proline--tRNA ligase (576 aa).

Belongs to the class-II aminoacyl-tRNA synthetase family. ProS type 1 subfamily. As to quaternary structure, homodimer.

Its subcellular location is the cytoplasm. The catalysed reaction is tRNA(Pro) + L-proline + ATP = L-prolyl-tRNA(Pro) + AMP + diphosphate. Functionally, catalyzes the attachment of proline to tRNA(Pro) in a two-step reaction: proline is first activated by ATP to form Pro-AMP and then transferred to the acceptor end of tRNA(Pro). As ProRS can inadvertently accommodate and process non-cognate amino acids such as alanine and cysteine, to avoid such errors it has two additional distinct editing activities against alanine. One activity is designated as 'pretransfer' editing and involves the tRNA(Pro)-independent hydrolysis of activated Ala-AMP. The other activity is designated 'posttransfer' editing and involves deacylation of mischarged Ala-tRNA(Pro). The misacylated Cys-tRNA(Pro) is not edited by ProRS. The sequence is that of Proline--tRNA ligase from Bordetella pertussis (strain Tohama I / ATCC BAA-589 / NCTC 13251).